The primary structure comprises 241 residues: Phosphatidylcholine synthase (241 aa).

Over 1-15 (MKFFNYRRVPYAEIR) the chain is Cytoplasmic. A helical transmembrane segment spans residues 16–36 (AFSVHILTASGSFLAFLGVVA). Topologically, residues 37 to 41 (AAEHR) are periplasmic. Residues 42–62 (FVDMFWWLGLALLVDGIDGPI) traverse the membrane as a helical segment. Residues 63 to 76 (ARKVQVKEVLPNWS) are Cytoplasmic-facing. A helical transmembrane segment spans residues 77-97 (GDTLDNVIDYVTYVLLPAFAL). The Periplasmic segment spans residues 98-100 (YQS). The helical transmembrane segment at 101 to 121 (GMIGEPWSFVAAGAIVVSSAI) threads the bilayer. Over 122–133 (YYADMGMKTDEY) the chain is Cytoplasmic. A helical transmembrane segment spans residues 134–154 (FFSGFPVVWNMVVFTLFVIQA). Residues 155 to 156 (SE) lie on the Periplasmic side of the membrane. A helical membrane pass occupies residues 157–177 (VTASIVVFLSVILTFLPINFL). Residues 178-187 (HPVRVKRLRP) are Cytoplasmic-facing. The chain crosses the membrane as a helical span at residues 188 to 208 (LNLGIFLVWSVLGMYALLLHF). Over 209–211 (ETP) the chain is Periplasmic. A helical membrane pass occupies residues 212–232 (PWVVVGVVATGLYLYVIGFIL). The Cytoplasmic portion of the chain corresponds to 233–241 (QIFPKLGRA).

Belongs to the CDP-alcohol phosphatidyltransferase class-I family. It depends on Mn(2+) as a cofactor.

It localises to the cell inner membrane. It carries out the reaction a CDP-1,2-diacyl-sn-glycerol + choline = a 1,2-diacyl-sn-glycero-3-phosphocholine + CMP + H(+). With respect to regulation, activated by CDP-diacylglycerol especially in the presence of Triton X-100 (0.1% w/v) at concentrations where micelles are formed. Maximal activation by Triton X-100 at 0.2% w/v, but higher concentrations become inhibitory. Inhibited by EDTA and high concentrations of choline. Its function is as follows. Condenses choline with CDP-diglyceride to produce phosphatidylcholine and CMP. In Rhizobium meliloti (strain 1021) (Ensifer meliloti), this protein is Phosphatidylcholine synthase (pcs).